The primary structure comprises 284 residues: Aldo-keto reductase MAV_3816 (284 aa).

Catalysis depends on Tyr-59, which acts as the Proton donor. 7 residues coordinate NADPH: Leu-199, Ile-237, Arg-239, Ser-240, Ala-241, Ser-248, and Arg-275.

It belongs to the aldo/keto reductase family.

The sequence is that of Aldo-keto reductase MAV_3816 from Mycobacterium avium (strain 104).